The sequence spans 438 residues: Thymidine phosphorylase (438 aa).

This sequence belongs to the thymidine/pyrimidine-nucleoside phosphorylase family. Homodimer.

The enzyme catalyses thymidine + phosphate = 2-deoxy-alpha-D-ribose 1-phosphate + thymine. It participates in pyrimidine metabolism; dTMP biosynthesis via salvage pathway; dTMP from thymine: step 1/2. In terms of biological role, the enzymes which catalyze the reversible phosphorolysis of pyrimidine nucleosides are involved in the degradation of these compounds and in their utilization as carbon and energy sources, or in the rescue of pyrimidine bases for nucleotide synthesis. The polypeptide is Thymidine phosphorylase (Agrobacterium fabrum (strain C58 / ATCC 33970) (Agrobacterium tumefaciens (strain C58))).